The chain runs to 666 residues: Protein-arginine deiminase type-4 (666 aa).

Ca(2+) is bound by residues Asn153, Asp155, Asp165, Asp168, Asp176, and Asp179. 2 positions are modified to citrulline: Arg212 and Arg218. Gln349 is a binding site for Ca(2+). The active site involves Asp350. Ca(2+) is bound by residues Glu351, Glu353, Asp369, and Ser370. Arg372, Arg374, and Arg383 each carry citrulline. Arg374 lines the substrate pocket. 3 residues coordinate Ca(2+): Phe407, Leu410, and Glu411. Catalysis depends on residues His471, Asp473, and Cys648.

This sequence belongs to the protein arginine deiminase family. The cofactor is Ca(2+). Post-translationally, autocitrullination at Arg-372 and Arg-374 inactivates the enzyme. Epidermis.

The protein localises to the cytoplasm. The protein resides in the nucleus. It is found in the cytoplasmic granule. The enzyme catalyses L-arginyl-[protein] + H2O = L-citrullyl-[protein] + NH4(+). Its function is as follows. Catalyzes the citrullination/deimination of arginine residues of proteins such as histones, thereby playing a key role in histone code and regulation of stem cell maintenance. Citrullinates histone H1 at 'Arg-54' (to form H1R54ci), histone H3 at 'Arg-2', 'Arg-8', 'Arg-17' and/or 'Arg-26' (to form H3R2ci, H3R8ci, H3R17ci, H3R26ci, respectively) and histone H4 at 'Arg-3' (to form H4R3ci). Acts as a key regulator of stem cell maintenance by mediating citrullination of histone H1: citrullination of 'Arg-54' of histone H1 (H1R54ci) results in H1 displacement from chromatin and global chromatin decondensation, thereby promoting pluripotency and stem cell maintenance. Promotes profound chromatin decondensation during the innate immune response to infection in neutrophils by mediating formation of H1R54ci. Required for the formation of neutrophil extracellular traps (NETs); NETs are mainly composed of DNA fibers and are released by neutrophils to bind pathogens during inflammation. Citrullination of histone H3 prevents their methylation by CARM1 and HRMT1L2/PRMT1 and represses transcription. Citrullinates EP300/P300 at 'Arg-2142', which favors its interaction with NCOA2/GRIP1. This is Protein-arginine deiminase type-4 (Padi4) from Rattus norvegicus (Rat).